Reading from the N-terminus, the 356-residue chain is Nicotinate-nucleotide--dimethylbenzimidazole phosphoribosyltransferase (356 aa).

The active-site Proton acceptor is the Glu-317.

It belongs to the CobT family. Homodimer.

It catalyses the reaction 5,6-dimethylbenzimidazole + nicotinate beta-D-ribonucleotide = alpha-ribazole 5'-phosphate + nicotinate + H(+). It functions in the pathway nucleoside biosynthesis; alpha-ribazole biosynthesis; alpha-ribazole from 5,6-dimethylbenzimidazole: step 1/2. Functionally, catalyzes the synthesis of alpha-ribazole-5'-phosphate from nicotinate mononucleotide (NAMN) and 5,6-dimethylbenzimidazole (DMB). This chain is Nicotinate-nucleotide--dimethylbenzimidazole phosphoribosyltransferase, found in Salmonella schwarzengrund (strain CVM19633).